The following is a 492-amino-acid chain: Malonate-semialdehyde dehydrogenase (492 aa).

NAD(+) is bound by residues F156, K180, E183, K184, S233, and T255. Residue C288 is the Nucleophile of the active site. E387 contributes to the NAD(+) binding site.

Belongs to the aldehyde dehydrogenase family. IolA subfamily. Homotetramer.

The catalysed reaction is 3-oxopropanoate + NAD(+) + CoA + H2O = hydrogencarbonate + acetyl-CoA + NADH + H(+). It catalyses the reaction 2-methyl-3-oxopropanoate + NAD(+) + CoA + H2O = propanoyl-CoA + hydrogencarbonate + NADH + H(+). The protein operates within polyol metabolism; myo-inositol degradation into acetyl-CoA; acetyl-CoA from myo-inositol: step 7/7. Functionally, catalyzes the oxidation of malonate semialdehyde (MSA) and methylmalonate semialdehyde (MMSA) into acetyl-CoA and propanoyl-CoA, respectively. Is involved in a myo-inositol catabolic pathway. Bicarbonate, and not CO2, is the end-product of the enzymatic reaction. In Lacticaseibacillus casei (Lactobacillus casei), this protein is Malonate-semialdehyde dehydrogenase.